A 323-amino-acid chain; its full sequence is Extracellular endo-alpha-(1-&gt;5)-L-arabinanase 1 (323 aa).

The N-terminal stretch at 1–32 is a signal peptide; that stretch reads MKKKKTWKRFLHFSSAALAAGLIFTSAAPAEA. Aspartate 44 serves as the catalytic Proton acceptor. Substrate is bound at residue aspartate 44. Aspartate 107 lines the Ca(2+) pocket. Substrate is bound by residues glycine 125 and 160–163; that span reads NAID. Glutamate 165 serves as a coordination point for Ca(2+). Residue 180 to 182 coordinates substrate; it reads SFW. The active-site Proton donor is glutamate 215. Ca(2+) is bound at residue aspartate 287.

The protein belongs to the glycosyl hydrolase 43 family. Ca(2+) serves as cofactor.

The protein resides in the secreted. It catalyses the reaction Endohydrolysis of (1-&gt;5)-alpha-arabinofuranosidic linkages in (1-&gt;5)-arabinans.. Its pathway is glycan metabolism; L-arabinan degradation. Functionally, involved in the degradation of arabinan and is a key enzyme in the complete degradation of the plant cell wall. Catalyzes the internal cleavage of alpha-(1-&gt;5)-L-arabinofuranosyl residues of linear 1,5-alpha-L-arabinan and of branched sugar beet arabinan. It displays no activity against heavily substituted arabinans or a range of other polysaccharides (larch wood arabinogalactan, wheat arabinoxylan and p-nitrophenyl-alpha-L-arabinofuranoside). The enzyme activity is progressively reduced as alpha-(1-&gt;5)-chains become shorter or more highly substituted. The chain is Extracellular endo-alpha-(1-&gt;5)-L-arabinanase 1 (abnA) from Bacillus subtilis (strain 168).